A 121-amino-acid polypeptide reads, in one-letter code: Large ribosomal subunit protein bL19 (121 aa).

It belongs to the bacterial ribosomal protein bL19 family.

Its function is as follows. This protein is located at the 30S-50S ribosomal subunit interface and may play a role in the structure and function of the aminoacyl-tRNA binding site. The polypeptide is Large ribosomal subunit protein bL19 (Neisseria meningitidis serogroup C (strain 053442)).